A 566-amino-acid polypeptide reads, in one-letter code: 4-hydroxy-7-methoxy-3-oxo-3,4-dihydro-2H-1,4-benzoxazin-2-yl glucoside beta-D-glucosidase 1, chloroplastic (566 aa).

The transit peptide at 1–54 (MAPLLAAAMNHAAAHPGLRSHLVGPNNESFSRHHLPSSSPQSSKRRCNLSFTTR) directs the protein to the chloroplast. The disordered stretch occupies residues 17-47 (GLRSHLVGPNNESFSRHHLPSSSPQSSKRRC). Residues Q92, H196, and 244 to 245 (NE) each bind a beta-D-glucoside. The Proton donor role is filled by E245. C264 and C270 are joined by a disulfide. Residues 325–361 (SFLDKQAEERSWDINLGWFLEPVVRGDYPFSMRSLAR) are dimerization. Y387 contacts a beta-D-glucoside. Dimerization stretches follow at residues 394 to 405 (NIDISPNYSPVL) and 450 to 453 (KYGN). A beta-D-glucoside-binding positions include E460, W511, 518 to 519 (EW), and Y527. E460 functions as the Nucleophile in the catalytic mechanism.

The protein belongs to the glycosyl hydrolase 1 family. As to quaternary structure, homo- and heterodimer. Expressed in all seedling parts. Most abundant in the coleoptile.

The protein resides in the plastid. It localises to the chloroplast. The enzyme catalyses Hydrolysis of terminal, non-reducing beta-D-glucosyl residues with release of beta-D-glucose.. It catalyses the reaction DIMBOA beta-D-glucoside + H2O = DIMBOA + D-glucose. It carries out the reaction DIBOA beta-D-glucoside + H2O = DIBOA + D-glucose. Reversibly inhibited by micromolar concentrations of Hg(2+) or Ag(+), but irreversibly inhibited by alkylation in presence of urea. Competitive inhibition by p-nitrophenyl beta-D-thioglucoside (pNPTGlc), glucotetrazole, and para-hydroxy-S-mandelonitrile beta-glucoside (dhurrin). Functionally, is implicated in many functions such as ABA metabolism, hydrolysis of conjugated gibberellins, conversion of storage forms of cytokinins to active forms. Also acts in defense of young plant parts against pests via the production of hydroxamic acids from hydroxamic acid glucosides. Enzymatic activity is highly correlated with plant growth. The preferred substrate is DIMBOA-beta-D-glucoside. Hydrolyzes the chromogenic substrate 6-bromo-2-naphthyl-beta-D-glucoside (6BNGlc) and various artificial aryl beta-glucosides. No activity with cellobiose, arbutin, gentiobiose, linamarin or dhurrin as substrates. The chain is 4-hydroxy-7-methoxy-3-oxo-3,4-dihydro-2H-1,4-benzoxazin-2-yl glucoside beta-D-glucosidase 1, chloroplastic (GLU1) from Zea mays (Maize).